A 338-amino-acid polypeptide reads, in one-letter code: Ketol-acid reductoisomerase (NADP(+)) (338 aa).

The KARI N-terminal Rossmann domain maps to 1–181 (MRVFYDKDCD…GGGRTGIIET (181 aa)). Residues 24 to 27 (YGSQ), Arg-47, Ser-50, Thr-52, and 82 to 85 (DEFQ) contribute to the NADP(+) site. The active site involves His-107. Gly-133 is an NADP(+) binding site. The KARI C-terminal knotted domain maps to 182 to 327 (TFKDETETDL…EKLRAMMPWI (146 aa)). Positions 190, 194, 226, and 230 each coordinate Mg(2+). Ser-251 is a binding site for substrate.

This sequence belongs to the ketol-acid reductoisomerase family. Mg(2+) is required as a cofactor.

The catalysed reaction is (2R)-2,3-dihydroxy-3-methylbutanoate + NADP(+) = (2S)-2-acetolactate + NADPH + H(+). It catalyses the reaction (2R,3R)-2,3-dihydroxy-3-methylpentanoate + NADP(+) = (S)-2-ethyl-2-hydroxy-3-oxobutanoate + NADPH + H(+). It functions in the pathway amino-acid biosynthesis; L-isoleucine biosynthesis; L-isoleucine from 2-oxobutanoate: step 2/4. The protein operates within amino-acid biosynthesis; L-valine biosynthesis; L-valine from pyruvate: step 2/4. Functionally, involved in the biosynthesis of branched-chain amino acids (BCAA). Catalyzes an alkyl-migration followed by a ketol-acid reduction of (S)-2-acetolactate (S2AL) to yield (R)-2,3-dihydroxy-isovalerate. In the isomerase reaction, S2AL is rearranged via a Mg-dependent methyl migration to produce 3-hydroxy-3-methyl-2-ketobutyrate (HMKB). In the reductase reaction, this 2-ketoacid undergoes a metal-dependent reduction by NADPH to yield (R)-2,3-dihydroxy-isovalerate. This Pseudomonas aeruginosa (strain LESB58) protein is Ketol-acid reductoisomerase (NADP(+)).